Reading from the N-terminus, the 307-residue chain is Leucine-rich repeat-containing protein 25 (307 aa).

The N-terminal stretch at 1–20 (MGGPLMWALLLPLLLHQAGS) is a signal peptide. Residues 21–168 (QTSSCSVLSG…SCPSGLTKIA (148 aa)) are Extracellular-facing. N-linked (GlcNAc...) asparagine glycosylation is found at Asn44 and Asn56. LRR repeat units lie at residues 63-86 (SVQL…RDLE) and 87-110 (QLQL…XXGC). N-linked (GlcNAc...) asparagine glycosylation is found at Asn95, Asn132, and Asn151. The chain crosses the membrane as a helical span at residues 169–189 (IGALAASGSLLLVLAIAGPVL). The Cytoplasmic segment spans residues 190 to 307 (AWRFCRHRMD…DDEEYVVPGR (118 aa)). The disordered stretch occupies residues 205–249 (TWASQDGSRSGSGRQPRYSSQGRRPKSPANTPPRSSTPDYENVFV). A compositionally biased stretch (low complexity) spans 211–226 (GSRSGSGRQPRYSSQG). The span at 232–243 (PANTPPRSSTPD) shows a compositional bias: polar residues. Residue Tyr286 is modified to Phosphotyrosine.

Interacts with RIGI. Interacts with SQSTM1. Interacts with p65/RELA; this interaction promotes the degradation of RELA through autophagy.

It is found in the membrane. Its subcellular location is the cytoplasm. Plays a role in the inhibition of RLR-mediated type I interferon signaling pathway by targeting RIGI for autophagic degradation. Interacts specifically with ISG15-associated RIGI to promote interaction between RIGI and the autophagic cargo receptor p62/SQSTM1 to mediate RIGI degradation via selective autophagy. Plays also a role in the inhibition of NF-kappa-B signaling pathway and inflammatory response by promoting the degradation of p65/RELA. The protein is Leucine-rich repeat-containing protein 25 (LRRC25) of Bos taurus (Bovine).